The primary structure comprises 61 residues: Small ribosomal subunit protein uS14 (61 aa).

Residues C24, C27, C40, and C43 each coordinate Zn(2+).

The protein belongs to the universal ribosomal protein uS14 family. Zinc-binding uS14 subfamily. In terms of assembly, part of the 30S ribosomal subunit. Contacts proteins S3 and S10. Zn(2+) serves as cofactor.

Its function is as follows. Binds 16S rRNA, required for the assembly of 30S particles and may also be responsible for determining the conformation of the 16S rRNA at the A site. This is Small ribosomal subunit protein uS14 from Pelobacter propionicus (strain DSM 2379 / NBRC 103807 / OttBd1).